Reading from the N-terminus, the 1783-residue chain is Collagen alpha-1(XXVII) chain A (1783 aa).

The N-terminal stretch at 1–35 (MNLATRRRVRRTSRLVAKRALLLCILLYCTSFGFT) is a signal peptide. The Laminin G-like domain maps to 73 to 235 (TTRARVTTPT…NICSAIRRQC (163 aa)). 5 disordered regions span residues 288 to 312 (SSSV…LALM), 327 to 524 (HKPS…PRTP), 553 to 744 (VGAP…APGP), 772 to 1461 (PGNM…GDIG), and 1512 to 1546 (GNPG…LPGP). The span at 403-415 (KPTSVPKPNPTKN) shows a compositional bias: low complexity. Residues 436–447 (LPAPKPTVPKRP) show a composition bias toward pro residues. Polar residues predominate over residues 462–494 (HTTPLTPKSTLAPNSTSKKPLPTLKSTSFTTAA). The interval 553-1547 (VGAPGLKGDQ…RGPPGLPGPP (995 aa)) is triple-helical region. The Collagen-like 1 domain maps to 554–608 (GAPGLKGDQGESGLPGPPGKPGQPGMRGPRGPPGPHGKPGRPGPTGLKGKKGDPG). 5 stretches are compositionally biased toward low complexity: residues 622–633 (VGLPGPVGLVGV), 651–661 (EPGEQGPVGEA), 735–744 (EPGVIGAPGP), 817–829 (PGPQ…IGPS), and 861–870 (ARGLPGPRGA). Collagen-like domains lie at 818 to 873 (GPQG…AAGR) and 845 to 902 (GKPG…GALG). Over residues 926 to 935 (GFIGPGGEAG) the composition is skewed to gly residues. The span at 967–976 (GGPPGPPGSP) shows a compositional bias: pro residues. Composition is skewed to low complexity over residues 978-988 (SPGSRGPIGIR) and 1098-1129 (SIGL…AGPD). The 58-residue stretch at 986–1043 (GIRGPKGRRGPRGPDGVPGEIGTEGKKGPDGPPGKIGFPGHAGKIGESGEVGPKGFPG) folds into the Collagen-like 4 domain. Basic and acidic residues-rich tracts occupy residues 1131–1158 (TKGE…KDGP), 1170–1182 (PEGK…ERGK), and 1257–1267 (AKGEQGDDGKV). A Collagen-like 5 domain is found at 1269-1326 (GPTGAPGLRGPVGKRGDRGEPGDPGYVGQQGVDGLRGKPGAPGLPGDPGPRGTQGPKG). 2 stretches are compositionally biased toward low complexity: residues 1334-1349 (KGKQ…RGSP) and 1396-1409 (LPGK…VGVI). Collagen-like domains lie at 1446-1503 (GPQG…GLAG) and 1497-1549 (GRGG…PPGI). Residues 1537 to 1546 (PRGPPGLPGP) show a composition bias toward pro residues. Residues 1551-1783 (LAMNQDFGLG…HLEVGPVCFL (233 aa)) constitute a propeptide, C-terminal propeptide. The 195-residue stretch at 1589-1783 (PEILRTLDYL…HLEVGPVCFL (195 aa)) folds into the Fibrillar collagen NC1 domain. 3 disulfide bridges follow: C1619–C1651, C1660–C1781, and C1696–C1734. 4 residues coordinate Ca(2+): D1637, N1639, C1642, and D1645. N1698 carries N-linked (GlcNAc...) asparagine glycosylation.

The protein belongs to the fibrillar collagen family. Expressed dynamically in the notochord from late epiboly, spreading to the anterior notochord by 24 hpf, and then throughout the notochord by 30 hpf. Subsequently, notochordal expression becomes restricted to the distal tip of the tail by 48 hpf and is no longer detectable by 72 hpf. Also expressed throughout the floor plate and hypochord at 24 hpf, and in forming head cartilages and the first forming tooth.

The protein localises to the secreted. It localises to the extracellular space. It is found in the extracellular matrix. Its function is as follows. May play a role during the calcification of cartilage and the transition of cartilage to bone. Together with col27a1b, plays a role in development of the notochord and axial skeleton. This is Collagen alpha-1(XXVII) chain A from Danio rerio (Zebrafish).